The following is a 505-amino-acid chain: Apolipoprotein N-acyltransferase (505 aa).

The next 6 membrane-spanning stretches (helical) occupy residues Phe26–Leu46, Phe66–Ile86, Leu89–Leu109, Leu129–Leu149, Phe161–Leu181, and Ile186–Ile206. The region spanning Ile225–Pro471 is the CN hydrolase domain. The Proton acceptor role is filled by Glu264. Lys330 is an active-site residue. Cys382 acts as the Nucleophile in catalysis. The chain crosses the membrane as a helical span at residues Phe481–Pro501.

The protein belongs to the CN hydrolase family. Apolipoprotein N-acyltransferase subfamily.

It is found in the cell inner membrane. It catalyses the reaction N-terminal S-1,2-diacyl-sn-glyceryl-L-cysteinyl-[lipoprotein] + a glycerophospholipid = N-acyl-S-1,2-diacyl-sn-glyceryl-L-cysteinyl-[lipoprotein] + a 2-acyl-sn-glycero-3-phospholipid + H(+). It functions in the pathway protein modification; lipoprotein biosynthesis (N-acyl transfer). Functionally, catalyzes the phospholipid dependent N-acylation of the N-terminal cysteine of apolipoprotein, the last step in lipoprotein maturation. The chain is Apolipoprotein N-acyltransferase from Vibrio parahaemolyticus serotype O3:K6 (strain RIMD 2210633).